The chain runs to 288 residues: Protoheme IX farnesyltransferase (288 aa).

9 consecutive transmembrane segments (helical) span residues 6–26, 44–64, 89–109, 111–131, 138–158, 169–189, 213–233, 238–258, and 268–288; these read VILYLLEVLKPKIILGNLLSL, FLDSLSLFLIVGSACVLNNVI, LAILIAMFMLFLGLILCVKFI, VVCFCLFLLGWLTYIFLYSFF, ISTIVGSISGSLPPIVGYCSV, LLIMFALWQIPHSYAICILHF, IILHIILFFISVIVLTFINSI, LIISFFLCLTWLYYSLLELTI, and IFRWSIIVIFLLNIIMLFGFV.

This sequence belongs to the UbiA prenyltransferase family. Protoheme IX farnesyltransferase subfamily.

It is found in the cell membrane. It carries out the reaction heme b + (2E,6E)-farnesyl diphosphate + H2O = Fe(II)-heme o + diphosphate. Its pathway is porphyrin-containing compound metabolism; heme O biosynthesis; heme O from protoheme: step 1/1. Functionally, converts heme B (protoheme IX) to heme O by substitution of the vinyl group on carbon 2 of heme B porphyrin ring with a hydroxyethyl farnesyl side group. In Buchnera aphidicola subsp. Baizongia pistaciae (strain Bp), this protein is Protoheme IX farnesyltransferase.